Reading from the N-terminus, the 373-residue chain is P2Y purinoceptor 1 (373 aa).

The Extracellular portion of the chain corresponds to methionine 1 to phenylalanine 51. N-linked (GlcNAc...) asparagine glycosylation is found at asparagine 11 and asparagine 27. 2 disulfides stabilise this stretch: cysteine 42-cysteine 296 and cysteine 124-cysteine 202. An ADP-binding site is contributed by lysine 46. A helical transmembrane segment spans residues tyrosine 52–tryptophan 74. Residues methionine 75–serine 87 are Cytoplasmic-facing. Residues valine 88–phenylalanine 109 form a helical membrane-spanning segment. Over tyrosine 110–lysine 125 the chain is Extracellular. The N-linked (GlcNAc...) asparagine glycan is linked to asparagine 113. The helical transmembrane segment at leucine 126 to alanine 147 threads the bilayer. The Cytoplasmic portion of the chain corresponds to histidine 148–lysine 166. Residues asparagine 167–phenylalanine 188 traverse the membrane as a helical segment. At tyrosine 189–tyrosine 214 the chain is on the extracellular side. N-linked (GlcNAc...) asparagine glycosylation is present at asparagine 197. Tyrosine 203–serine 205 serves as a coordination point for ADP. A helical membrane pass occupies residues phenylalanine 215 to tyrosine 237. The Cytoplasmic segment spans residues glycine 238 to tyrosine 260. The chain crosses the membrane as a helical span at residues leucine 261–leucine 284. ADP contacts are provided by residues asparagine 283–arginine 287, tyrosine 303–tyrosine 306, and arginine 310. Topologically, residues arginine 285–tyrosine 303 are extracellular. The chain crosses the membrane as a helical span at residues alanine 304–phenylalanine 325. The Cytoplasmic segment spans residues leucine 326–leucine 373.

Belongs to the G-protein coupled receptor 1 family. Expressed in muscle, heart, liver, kidney, lung, brain, spleen, but not in testis.

It localises to the cell membrane. Functionally, receptor for extracellular adenine nucleotides such as ADP. In platelets, binding to ADP leads to mobilization of intracellular calcium ions via activation of phospholipase C, a change in platelet shape, and ultimately platelet aggregation. This is P2Y purinoceptor 1 (P2ry1) from Rattus norvegicus (Rat).